The chain runs to 290 residues: GTPase Era (290 aa).

An Era-type G domain is found at 2 to 169 (KSGFVSIIGR…KDKIYANLQE (168 aa)). Residues 10 to 17 (GRPSTGKS) are G1. 10–17 (GRPSTGKS) provides a ligand contact to GTP. The tract at residues 36 to 40 (QTTRN) is G2. Residues 57–60 (DTPG) form a G3 region. Residues 57–61 (DTPGF) and 119–122 (NKID) contribute to the GTP site. A G4 region spans residues 119 to 122 (NKID). A G5 region spans residues 148–150 (ISA). The 77-residue stretch at 200-276 (LKEELPYSLY…DLFLQVKLRK (77 aa)) folds into the KH type-2 domain.

Belongs to the TRAFAC class TrmE-Era-EngA-EngB-Septin-like GTPase superfamily. Era GTPase family. Monomer.

The protein resides in the cytoplasm. The protein localises to the cell inner membrane. An essential GTPase that binds both GDP and GTP, with rapid nucleotide exchange. Plays a role in 16S rRNA processing and 30S ribosomal subunit biogenesis and possibly also in cell cycle regulation and energy metabolism. The protein is GTPase Era of Borrelia hermsii (strain HS1 / DAH).